Consider the following 143-residue polypeptide: Putative pre-16S rRNA nuclease (143 aa).

The protein belongs to the YqgF nuclease family.

Its subcellular location is the cytoplasm. Could be a nuclease involved in processing of the 5'-end of pre-16S rRNA. The polypeptide is Putative pre-16S rRNA nuclease (Lactobacillus johnsonii (strain CNCM I-12250 / La1 / NCC 533)).